Here is a 115-residue protein sequence, read N- to C-terminus: MNIMITLFINMSLASLLVLIAFWLPQLNTYTEKSSPYECGFDPMGSARLPFSMKFFLVAITFLLFDLEIALLLPLPWATQANTMTPMLTTALVLILLLALGLAYEWLQKGLEWNE.

The next 3 helical transmembrane spans lie at 3–23 (IMIT…IAFW), 55–75 (FFLV…LLPL), and 87–107 (MLTT…YEWL).

This sequence belongs to the complex I subunit 3 family. In terms of assembly, core subunit of respiratory chain NADH dehydrogenase (Complex I) which is composed of 45 different subunits. Interacts with TMEM186. Interacts with TMEM242.

Its subcellular location is the mitochondrion inner membrane. The catalysed reaction is a ubiquinone + NADH + 5 H(+)(in) = a ubiquinol + NAD(+) + 4 H(+)(out). Core subunit of the mitochondrial membrane respiratory chain NADH dehydrogenase (Complex I) which catalyzes electron transfer from NADH through the respiratory chain, using ubiquinone as an electron acceptor. Essential for the catalytic activity of complex I. The protein is NADH-ubiquinone oxidoreductase chain 3 of Dasypus novemcinctus (Nine-banded armadillo).